The sequence spans 379 residues: Guanine nucleotide-binding protein subunit alpha-12 (379 aa).

The S-palmitoyl cysteine moiety is linked to residue cysteine 11. The G-alpha domain occupies 54-379; the sequence is RLVKILLLGA…QENLKDIMLQ (326 aa). A G1 motif region spans residues 57-70; that stretch reads KILLLGAGESGKST. GTP contacts are provided by residues 65 to 70 and 200 to 203; these read ESGKST and LLAR. Serine 69 is a Mg(2+) binding site. The interval 198 to 206 is G2 motif; it reads DILLARKAT. Threonine 206 lines the Mg(2+) pocket. Threonine 206 carries the post-translational modification Phosphothreonine. The segment at 221-230 is G3 motif; the sequence is FKMVDVGGQR. The tract at residues 290 to 297 is G4 motif; it reads ILFLNKMD. Residues 294-297 and alanine 351 each bind GTP; that span reads NKMD. Residues 349–354 are G5 motif; it reads TTAIDT.

It belongs to the G-alpha family. G(12) subfamily. As to quaternary structure, g proteins are composed of 3 units; alpha, beta and gamma. The alpha chain contains the guanine nucleotide binding site. Interacts with UBXD5. Interacts (in GTP-bound form) with PPP5C (via TPR repeats); activates PPP5C phosphatase activity and translocates PPP5C to the cell membrane. Interacts with RGS22. Interacts (via N-terminus) with NAPA; the interaction promotes CDH5 localization to plasma membrane. Interacts with CTNND1 (via N-terminus); the interaction regulates CDH1-mediated cell-cell adhesion. Interacts with PPP2R1A; the interaction promotes protein phosphatase 2A activation causing dephosphorylation of MAPT. Interacts (in GTP-bound form) with ARHGEF1. Interacts (in GTP-bound form) with ARHGEF11 (via RGS domain). Interacts (in GTP-bound form) with ARHGEF12 (via RGS domain).

It is found in the cell membrane. Its subcellular location is the lateral cell membrane. The protein resides in the cytoplasm. Functionally, guanine nucleotide-binding proteins (G proteins) are involved as modulators or transducers in various transmembrane signaling systems. Activates effector molecule RhoA by binding and activating RhoGEFs (ARHGEF12/LARG). GNA12-dependent Rho signaling subsequently regulates transcription factor AP-1 (activating protein-1). GNA12-dependent Rho signaling also regulates protein phosphatese 2A activation causing dephosphorylation of its target proteins. Promotes tumor cell invasion and metastasis by activating RhoA/ROCK signaling pathway and up-regulating pro-inflammatory cytokine production. Inhibits CDH1-mediated cell adhesion in process independent from Rho activation. Together with NAPA promotes CDH5 localization to plasma membrane. May play a role in the control of cell migration through the TOR signaling cascade. This chain is Guanine nucleotide-binding protein subunit alpha-12 (Gna12), found in Rattus norvegicus (Rat).